The sequence spans 672 residues: GPI mannosyltransferase pigv-1 (672 aa).

At 1 to 134 (MRRREPGRDV…TQRCLGFCFR (134 aa)) the chain is on the cytoplasmic side. The span at 82–94 (REESDSSSSREDS) shows a compositional bias: basic and acidic residues. Positions 82–115 (REESDSSSSREDSPLGSTETGESCSTTDDEESKE) are disordered. A compositionally biased stretch (low complexity) spans 97 to 107 (GSTETGESCST). A helical transmembrane segment spans residues 135–155 (QLFFSRMWVFILQFIASYYAG). The Extracellular portion of the chain corresponds to 156–239 (DRFRTDGFNL…NGMESVFGWT (84 aa)). Residues 240–260 (FPPWVTITLAAVFVNLFCFLL) form a helical membrane-spanning segment. Residues 261 to 277 (CGMTLYQVVLIMTRSVK) are Cytoplasmic-facing. Helical transmembrane passes span 278-298 (ISLL…FSSA) and 299-319 (YSES…LFGL). The Extracellular segment spans residues 320-345 (RGKGFWHRMLKGFTGTICFGLTFAVR). A helical transmembrane segment spans residues 346–366 (SNGLLNFLYVAWIWCGTLLWD). Residues 367-423 (EEMPIPDCHKLISTLAATKNERYKQEWQAKFWRFQQKRKQNRKVFRWTDPNFSRCVT) lie on the Cytoplasmic side of the membrane. The chain crosses the membrane as a helical span at residues 424–444 (LFIVIVCAISATLLFFTPYVF). The Extracellular segment spans residues 445 to 520 (MTNFTADEFC…WSVKFFGYWK (76 aa)). The helical transmembrane segment at 521 to 541 (IKKIPCFLMMLPAAILTVLAI) threads the bilayer. Residues 542–569 (KSSWNDVFLNKRWNNIWVLTARSDHSLP) are Cytoplasmic-facing. Residues 570-590 (MAIHSSVLLFVAIFYINSEVF) traverse the membrane as a helical segment. At 591–592 (TR) the chain is on the extracellular side. The chain crosses the membrane as a helical span at residues 593–613 (IIFSSSPFIYIYIATYIDKLT). At 614–648 (QGTIAGNRLWQYFESPGILPFFVFRRVWQDGWRGK) the chain is on the cytoplasmic side. Residues 649–669 (LLYIYILGYFVFGTMAHSAWL) form a helical membrane-spanning segment. The Extracellular segment spans residues 670–672 (PFT).

The protein belongs to the PIGV family. Expressed in epithelial tissues including the epidermis, pharynx, intestine, rectum and excretory cell during embryogenesis.

Its subcellular location is the endoplasmic reticulum membrane. Its pathway is glycolipid biosynthesis; glycosylphosphatidylinositol-anchor biosynthesis. Its function is as follows. Alpha-1,6-mannosyltransferase involved in glycosylphosphatidylinositol-anchor biosynthesis. Transfers the second mannose to the glycosylphosphatidylinositol during GPI precursor assembly. Required for maintenance of epithelial integrity during embryogenesis. This is GPI mannosyltransferase pigv-1 from Caenorhabditis elegans.